The sequence spans 255 residues: Phosphoribosylaminoimidazole-succinocarboxamide synthase A (255 aa).

Belongs to the SAICAR synthetase family.

It catalyses the reaction 5-amino-1-(5-phospho-D-ribosyl)imidazole-4-carboxylate + L-aspartate + ATP = (2S)-2-[5-amino-1-(5-phospho-beta-D-ribosyl)imidazole-4-carboxamido]succinate + ADP + phosphate + 2 H(+). The protein operates within purine metabolism; IMP biosynthesis via de novo pathway; 5-amino-1-(5-phospho-D-ribosyl)imidazole-4-carboxamide from 5-amino-1-(5-phospho-D-ribosyl)imidazole-4-carboxylate: step 1/2. The protein is Phosphoribosylaminoimidazole-succinocarboxamide synthase A (purC1) of Bradyrhizobium diazoefficiens (strain JCM 10833 / BCRC 13528 / IAM 13628 / NBRC 14792 / USDA 110).